An 842-amino-acid chain; its full sequence is GVEDLILLEPLDEESLIKNLQLRYEKKEIYTYIGNVVISMNPYQQLPIYGPEFIAKYRDYTFYELKPHIYALANVAYQSLKDRDRDQCILITGESGAGKTEASKLVMSYVAAVCGKGEQVNSVKEQLLQSNPVLEAFGNAKTIRNDNSSRFGKYMDIEFDFKGSPLGGVITNYLLEKSRVVKQLKGERNFHIFYQLLAGADTQLLKALKLEEDARGYAYLNGEVSRVNGMDDASNFRAVQNAMAVIGFSEEEIRQVLEVTALVLKLGNVKLAGEFQANGLPASGVCDGKGIQEIGEMMGLNSVELEKALSSRTMETGKEKVVTVLNVIQAQYARDALAKNIYSRLFDWIVNRINESIKVGTGEKRKVMGVLDIYGFEILEDNSFEQFVINYCNEKLQQVFIELTLKEEQEEYKREGIPWTKVEYFDNGIICDLIEHSQRGILAMLDEECLRPGVVSDTTFLAKLNQLFSKHSHYESKVTQNAQRQYDRTMGLSCFRICHYAGKVTYDVTSFIDKNNDLLFRDLSQTMWKAQHPLLHSLFPRGNPKEASPKRPPTAGTQFKNSVAILMKNLYSKNPNYIRCIKPNDQQQQGRFTSELVMVQARYLGLLENVRVRRAGYAFRQAYKPFLERYRLLSRSTWPRWNGEDREGVEKVLGSLILSSEELAYGRTKIFIRSPKTLFYLEEQRRLRLQQLATLIQKVYRGWRCRTHYQQMRKSQILLSAWFRGNKQKKHYGKIRSSVLLIQAFVRGWKARKNYRKYFRSGARITLANFIYQSITQKFLLNLKKNLPSTKVLDNTWPAAPYRCFNTANQELQHLFYQWKCKKYRDQLSPKQVQTLREKLCA.

Residues 1 to 686 (GVEDLILLEP…TLFYLEEQRR (686 aa)) enclose the Myosin motor domain. ATP is bound at residue 93–100 (GESGAGKT). Residues 563–585 (VAILMKNLYSKNPNYIRCIKPND) form an actin-binding region. IQ domains follow at residues 689–712 (LQQLATLIQKVYRGWRCRTHYQQM), 713–733 (RKSQILLSAWFRGNKQKKHYG), and 735–764 (IRSSVLLIQAFVRGWKARKNYRKYFRSGAR).

It belongs to the TRAFAC class myosin-kinesin ATPase superfamily. Myosin family. In terms of processing, phosphorylated by ALPK1.

Its function is as follows. Involved in directing the movement of organelles along actin filaments. The chain is Unconventional myosin-Ia (Myo1a) from Rattus norvegicus (Rat).